A 486-amino-acid chain; its full sequence is UDP-N-acetylmuramate--L-alanine ligase (486 aa).

An ATP-binding site is contributed by 126-132; sequence GTHGKTT.

The protein belongs to the MurCDEF family.

It is found in the cytoplasm. It catalyses the reaction UDP-N-acetyl-alpha-D-muramate + L-alanine + ATP = UDP-N-acetyl-alpha-D-muramoyl-L-alanine + ADP + phosphate + H(+). It functions in the pathway cell wall biogenesis; peptidoglycan biosynthesis. In terms of biological role, cell wall formation. In Pectobacterium carotovorum subsp. carotovorum (strain PC1), this protein is UDP-N-acetylmuramate--L-alanine ligase.